The chain runs to 344 residues: N-acetyl-gamma-glutamyl-phosphate reductase (344 aa).

Cysteine 149 is a catalytic residue.

The protein belongs to the NAGSA dehydrogenase family. Type 1 subfamily.

Its subcellular location is the cytoplasm. The catalysed reaction is N-acetyl-L-glutamate 5-semialdehyde + phosphate + NADP(+) = N-acetyl-L-glutamyl 5-phosphate + NADPH + H(+). It participates in amino-acid biosynthesis; L-arginine biosynthesis; N(2)-acetyl-L-ornithine from L-glutamate: step 3/4. Functionally, catalyzes the NADPH-dependent reduction of N-acetyl-5-glutamyl phosphate to yield N-acetyl-L-glutamate 5-semialdehyde. The protein is N-acetyl-gamma-glutamyl-phosphate reductase of Shouchella clausii (strain KSM-K16) (Alkalihalobacillus clausii).